A 481-amino-acid chain; its full sequence is Trigger factor (481 aa).

One can recognise a PPIase FKBP-type domain in the interval 174–261; that stretch reads GDIAVVGFKG…LKDLKTRELP (88 aa). The segment at 430-481 is disordered; the sequence is ENSTVTEKAPEAESDAAKASKPAAAKKDASKAKTAKTSKAKTAKAESESAES. A compositionally biased stretch (basic and acidic residues) spans 437 to 447; that stretch reads KAPEAESDAAK. Residues 462 to 471 are compositionally biased toward basic residues; it reads KTAKTSKAKT. The segment covering 472-481 has biased composition (basic and acidic residues); it reads AKAESESAES.

This sequence belongs to the FKBP-type PPIase family. Tig subfamily.

Its subcellular location is the cytoplasm. It catalyses the reaction [protein]-peptidylproline (omega=180) = [protein]-peptidylproline (omega=0). Functionally, involved in protein export. Acts as a chaperone by maintaining the newly synthesized protein in an open conformation. Functions as a peptidyl-prolyl cis-trans isomerase. The protein is Trigger factor of Synechococcus sp. (strain WH7803).